Consider the following 216-residue polypeptide: Urease operon 23 kDa accessory protein (216 aa).

Involved in the expression of hydrogenase activity. May be a regulatory gene affecting the expression of the hydrogenase operon or could be involved in the process of nickel incorporation into the hydrogenase apoenzyme. The chain is Urease operon 23 kDa accessory protein from Rhizobium meliloti (strain 1021) (Ensifer meliloti).